We begin with the raw amino-acid sequence, 569 residues long: 2-succinyl-5-enolpyruvyl-6-hydroxy-3-cyclohexene-1-carboxylate synthase (569 aa).

It belongs to the TPP enzyme family. MenD subfamily. Homodimer. Mg(2+) is required as a cofactor. Mn(2+) serves as cofactor. It depends on thiamine diphosphate as a cofactor.

The enzyme catalyses isochorismate + 2-oxoglutarate + H(+) = 5-enolpyruvoyl-6-hydroxy-2-succinyl-cyclohex-3-ene-1-carboxylate + CO2. Its pathway is quinol/quinone metabolism; 1,4-dihydroxy-2-naphthoate biosynthesis; 1,4-dihydroxy-2-naphthoate from chorismate: step 2/7. It functions in the pathway cofactor biosynthesis; phylloquinone biosynthesis. Its function is as follows. Catalyzes the thiamine diphosphate-dependent decarboxylation of 2-oxoglutarate and the subsequent addition of the resulting succinic semialdehyde-thiamine pyrophosphate anion to isochorismate to yield 2-succinyl-5-enolpyruvyl-6-hydroxy-3-cyclohexene-1-carboxylate (SEPHCHC). In Microcystis aeruginosa (strain NIES-843 / IAM M-2473), this protein is 2-succinyl-5-enolpyruvyl-6-hydroxy-3-cyclohexene-1-carboxylate synthase.